Reading from the N-terminus, the 77-residue chain is Acyl carrier protein (77 aa).

One can recognise a Carrier domain in the interval 2-77; sequence ADVLERVTKI…DAVTYIESHL (76 aa). Ser-37 is subject to O-(pantetheine 4'-phosphoryl)serine.

Belongs to the acyl carrier protein (ACP) family. 4'-phosphopantetheine is transferred from CoA to a specific serine of apo-ACP by AcpS. This modification is essential for activity because fatty acids are bound in thioester linkage to the sulfhydryl of the prosthetic group.

It localises to the cytoplasm. The protein operates within lipid metabolism; fatty acid biosynthesis. Its function is as follows. Carrier of the growing fatty acid chain in fatty acid biosynthesis. In Bacillus mycoides (strain KBAB4) (Bacillus weihenstephanensis), this protein is Acyl carrier protein.